A 584-amino-acid chain; its full sequence is Probable pectinesterase/pectinesterase inhibitor (584 aa).

An N-terminal signal peptide occupies residues 1–22 (MAVGKIVISVASMLLVVGVAIG). A pectinesterase inhibitor region spans residues 40–191 (NSHQKAVESL…KILSSNAIDI (152 aa)). Asparagine 91 and asparagine 105 each carry an N-linked (GlcNAc...) asparagine glycan. Positions 246–267 (AQAGRPGAPADEGIGEGGGGGG) are disordered. Residues 272-571 (THVVAKDGSG…TVANWLTPAN (300 aa)) are pectinesterase. Residues threonine 349 and glutamine 379 each coordinate substrate. The active-site Proton donor; for pectinesterase activity is aspartate 402. Aspartate 423 (nucleophile; for pectinesterase activity) is an active-site residue. Arginine 492 and tryptophan 494 together coordinate substrate.

This sequence in the N-terminal section; belongs to the PMEI family. It in the C-terminal section; belongs to the pectinesterase family. Pollen, and at much lower levels in pistils and petals.

The protein resides in the secreted. The protein localises to the cell wall. The catalysed reaction is [(1-&gt;4)-alpha-D-galacturonosyl methyl ester](n) + n H2O = [(1-&gt;4)-alpha-D-galacturonosyl](n) + n methanol + n H(+). The protein operates within glycan metabolism; pectin degradation; 2-dehydro-3-deoxy-D-gluconate from pectin: step 1/5. Its function is as follows. Acts in the modification of cell walls via demethylesterification of cell wall pectin. The polypeptide is Probable pectinesterase/pectinesterase inhibitor (BP19) (Brassica napus (Rape)).